The sequence spans 141 residues: Galactose-6-phosphate isomerase subunit LacA (141 aa).

It belongs to the LacAB/RpiB family. In terms of assembly, heteromultimeric protein consisting of LacA and LacB.

It catalyses the reaction aldehydo-D-galactose 6-phosphate = keto-D-tagatose 6-phosphate. The protein operates within carbohydrate metabolism; D-galactose 6-phosphate degradation; D-tagatose 6-phosphate from D-galactose 6-phosphate: step 1/1. The chain is Galactose-6-phosphate isomerase subunit LacA from Streptococcus pneumoniae serotype 2 (strain D39 / NCTC 7466).